Reading from the N-terminus, the 303-residue chain is Glutamyl-Q tRNA(Asp) synthetase (303 aa).

L-glutamate-binding positions include 9–13 (RFAPS) and glutamate 45. The 'HIGH' region motif lies at 12 to 22 (PSPSGSLHFGS). 4 residues coordinate Zn(2+): cysteine 101, cysteine 103, tyrosine 115, and cysteine 119. L-glutamate-binding residues include tyrosine 172 and arginine 190. Positions 228–232 (KLSKQ) match the 'KMSKS' region motif. Lysine 231 serves as a coordination point for ATP.

It belongs to the class-I aminoacyl-tRNA synthetase family. GluQ subfamily. Zn(2+) is required as a cofactor.

In terms of biological role, catalyzes the tRNA-independent activation of glutamate in presence of ATP and the subsequent transfer of glutamate onto a tRNA(Asp). Glutamate is transferred on the 2-amino-5-(4,5-dihydroxy-2-cyclopenten-1-yl) moiety of the queuosine in the wobble position of the QUC anticodon. The protein is Glutamyl-Q tRNA(Asp) synthetase of Serratia proteamaculans (strain 568).